A 609-amino-acid polypeptide reads, in one-letter code: Copper resistance protein A (609 aa).

The tat-type signal signal peptide spans 1–32; the sequence is MESRTSRRTFVKGLAAAGVLGGLGLWRSPSWA. 4 residues coordinate Cu cation: histidine 100, histidine 102, histidine 142, and histidine 144. Repeat copies occupy residues 367-374, 375-382, 408-415, 419-426, and 427-434. The 5 X 8 AA tandem repeats of D-H-X-X-M-X-G-M stretch occupies residues 367 to 434; that stretch reads DDMGMGGMDH…GMDHGAMGGM (68 aa). Cu cation contacts are provided by histidine 542, histidine 545, histidine 547, histidine 590, cysteine 591, histidine 592, histidine 596, and methionine 601.

Belongs to the multicopper oxidase family. CopA subfamily. Predicted to be exported by the Tat system. The position of the signal peptide cleavage has been experimentally proven.

The protein resides in the periplasm. Mediates copper resistance by sequestration of copper in the periplasm along with the copper-binding protein CopC. May have oxidase activity. The protein is Copper resistance protein A (copA) of Pseudomonas syringae pv. tomato.